A 513-amino-acid chain; its full sequence is MEISWGRALWRNFLGQSPDWYKLALIIFLIVNPLIFLISPFVAGWLLVAEFIFTLAMALKCYPLLPGGLLAIEAVFIGMTSAEHVREEVAANLEVLLLLMFMVAGIYFMKQLLLFIFTRLLLSIRSKMLLSLSFCVAAAFLSAFLDALTVVAVVISVAVGFYGIYHRVASSRTEDTDLQDDSHIDKHYKVVLEQFRGFLRSLMMHAGVGTALGGVMTMVGEPQNLIIAKAAGWHFGDFFLRMSPVTVPVLICGLLTCLLVEKLRWFGYGETLPEKVREVLQQFDDQSRNQRTRQDKIRLIVQAIIGVWLVTALALHLAEVGLIGLSVIILATSLTGVTDEHAIGKAFTESLPFTALLTVFFSVVAVIIDQQLFSPIIQFVLQASEHAQLSLFYIFNGLLSSISDNVFVGTIYINEAKAAMESGAITLKQYELLAVAINTGTNLPSVATPNGQAAFLFLLTSALAPLIRLSYGRMVWMALPYTLVLTLVGLLCVEFTLAPVTEWFMQMGWIATL.

The next 12 membrane-spanning stretches (helical) occupy residues 23-43, 52-72, 97-117, 120-140, 144-164, 202-222, 238-258, 303-323, 348-368, 391-411, 447-467, and 475-495; these read LALIIFLIVNPLIFLISPFVA, IFTLAMALKCYPLLPGGLLAI, LLLMFMVAGIYFMKQLLLFIF, LLLSIRSKMLLSLSFCVAAAF, FLDALTVVAVVISVAVGFYGI, LMMHAGVGTALGGVMTMVGEP, FFLRMSPVTVPVLICGLLTCL, AIIGVWLVTALALHLAEVGLI, TESLPFTALLTVFFSVVAVII, LFYIFNGLLSSISDNVFVGTI, ATPNGQAAFLFLLTSALAPLI, and VWMALPYTLVLTLVGLLCVEF.

Belongs to the NhaB Na(+)/H(+) (TC 2.A.34) antiporter family.

The protein resides in the cell inner membrane. The catalysed reaction is 2 Na(+)(in) + 3 H(+)(out) = 2 Na(+)(out) + 3 H(+)(in). Functionally, na(+)/H(+) antiporter that extrudes sodium in exchange for external protons. This is Na(+)/H(+) antiporter NhaB from Escherichia coli O6:H1 (strain CFT073 / ATCC 700928 / UPEC).